The chain runs to 162 residues: Transcription elongation factor GreA (162 aa).

Residues 45-74 are a coiled coil; it reads ENAEYEAAREKQAFIEGRIKELEDMTARAE.

Belongs to the GreA/GreB family.

Necessary for efficient RNA polymerase transcription elongation past template-encoded arresting sites. The arresting sites in DNA have the property of trapping a certain fraction of elongating RNA polymerases that pass through, resulting in locked ternary complexes. Cleavage of the nascent transcript by cleavage factors such as GreA or GreB allows the resumption of elongation from the new 3'terminus. GreA releases sequences of 2 to 3 nucleotides. This is Transcription elongation factor GreA from Rickettsia conorii (strain ATCC VR-613 / Malish 7).